The sequence spans 70 residues: Translation initiation factor IF-1 (70 aa).

Residues 1-70 enclose the S1-like domain; that stretch reads MKNDKLFLTG…LKLGRITQRK (70 aa).

It belongs to the IF-1 family. As to quaternary structure, component of the 30S ribosomal translation pre-initiation complex which assembles on the 30S ribosome in the order IF-2 and IF-3, IF-1 and N-formylmethionyl-tRNA(fMet); mRNA recruitment can occur at any time during PIC assembly.

It localises to the cytoplasm. Functionally, one of the essential components for the initiation of protein synthesis. Stabilizes the binding of IF-2 and IF-3 on the 30S subunit to which N-formylmethionyl-tRNA(fMet) subsequently binds. Helps modulate mRNA selection, yielding the 30S pre-initiation complex (PIC). Upon addition of the 50S ribosomal subunit IF-1, IF-2 and IF-3 are released leaving the mature 70S translation initiation complex. The chain is Translation initiation factor IF-1 from Mycoplasma genitalium (strain ATCC 33530 / DSM 19775 / NCTC 10195 / G37) (Mycoplasmoides genitalium).